We begin with the raw amino-acid sequence, 159 residues long: Nanos homolog 3 (159 aa).

The disordered stretch occupies residues 42 to 87 (QEMQSDADSDEQAAALLESPSGPIRSRDSPEQNTSPGGGKPKSSPA). A Nanos-type zinc finger spans residues 91–145 (FCSFCKHNGETEAVYTSHYLKNRDGDVMCPYLRQYKCPLCGATGAKAHTKRFCPM). Zn(2+) is bound by residues C92, C95, H108, C119, C127, C130, H138, and C143. 2 consecutive short sequence motifs (C2HC) follow at residues 92 to 119 (CSFC…DVMC) and 127 to 143 (CPLC…KRFC). The interval 92-159 (CSFCKHNGET…YCSVYAKSTW (68 aa)) is interaction with mylpfa.

This sequence belongs to the nanos family. Interacts (via C-terminus) with myosin mylpfa/mylz2; the interaction negatively regulates mylpfa phosphorylation. In terms of tissue distribution, in the embryo, displays early ubiquitous expression before being restricted to primordial germ cells in a 3'-UTR-dependent manner. Expressed in early stage germ cells in larval and adult ovaries.

The protein resides in the cytoplasm. The protein localises to the perinuclear region. Functionally, RNA-binding protein which binds to RNA with no sequence specificity. Probably represses translation of specific mRNAs. Essential for the development of primordial germ cells (PGCs) by ensuring their proper migration and survival but is not required for PGC specification. Also required to maintain oocyte production in the adult ovary. Negatively regulates phosphorylation of myosin mylpfa/mylz2. In Danio rerio (Zebrafish), this protein is Nanos homolog 3.